Here is a 254-residue protein sequence, read N- to C-terminus: 3-dehydroquinate dehydratase (254 aa).

3-dehydroquinate is bound by residues 47–49 (EFR) and R83. The active-site Proton donor/acceptor is H144. K171 acts as the Schiff-base intermediate with substrate in catalysis. Residues R213, S232, and Q236 each coordinate 3-dehydroquinate.

Belongs to the type-I 3-dehydroquinase family. As to quaternary structure, homodimer.

It catalyses the reaction 3-dehydroquinate = 3-dehydroshikimate + H2O. The protein operates within metabolic intermediate biosynthesis; chorismate biosynthesis; chorismate from D-erythrose 4-phosphate and phosphoenolpyruvate: step 3/7. Involved in the third step of the chorismate pathway, which leads to the biosynthesis of aromatic amino acids. Catalyzes the cis-dehydration of 3-dehydroquinate (DHQ) and introduces the first double bond of the aromatic ring to yield 3-dehydroshikimate. This chain is 3-dehydroquinate dehydratase, found in Neisseria meningitidis serogroup C / serotype 2a (strain ATCC 700532 / DSM 15464 / FAM18).